Here is a 269-residue protein sequence, read N- to C-terminus: Phosphonoacetaldehyde hydrolase (269 aa).

The active-site Nucleophile is the Asp-10. Positions 10 and 12 each coordinate Mg(2+). Lys-52 functions as the Schiff-base intermediate with substrate in the catalytic mechanism. Asp-186 is a Mg(2+) binding site.

It belongs to the HAD-like hydrolase superfamily. PhnX family. In terms of assembly, homodimer. Mg(2+) is required as a cofactor.

It carries out the reaction phosphonoacetaldehyde + H2O = acetaldehyde + phosphate + H(+). Functionally, involved in phosphonate degradation. The polypeptide is Phosphonoacetaldehyde hydrolase (Salmonella paratyphi A (strain ATCC 9150 / SARB42)).